We begin with the raw amino-acid sequence, 310 residues long: Olfactory receptor 1496 (310 aa).

Over 1–23 (MNNQTFITQFLLLGLPIPEEHQH) the chain is Extracellular. N-linked (GlcNAc...) asparagine glycosylation occurs at asparagine 3. The helical transmembrane segment at 24 to 48 (LFYALFLVMYLTTILGNLLIIVLVQ) threads the bilayer. Topologically, residues 49–55 (LDSQLHT) are cytoplasmic. The helical transmembrane segment at 56–77 (PMYLFLSNLSFSDLCFSSVTMP) threads the bilayer. Over 78–98 (KLLQNMRSQDTSIPYGGCLAQ) the chain is Extracellular. A disulfide bridge connects residues cysteine 95 and cysteine 187. Residues 99 to 118 (TYFFMVFGDMESFLLVAMAY) traverse the membrane as a helical segment. At 119–137 (DRYVAICFPLHYTSIMSPK) the chain is on the cytoplasmic side. Residues 138–156 (LCTCLVLLLWMLTTSHAMM) form a helical membrane-spanning segment. Over 157 to 194 (HTLLAARLSFCENNVVLNFFCDLFVLLKLACSDTYINE) the chain is Extracellular. The chain crosses the membrane as a helical span at residues 195 to 217 (LMIFIMSTLLIIIPFFLIVMSYA). Residues 218–234 (RIISSILKVPSTQGICK) are Cytoplasmic-facing. A helical membrane pass occupies residues 235–258 (VFSTCGSHLSVVSLFYGTIIGLYL). The Extracellular portion of the chain corresponds to 259 to 270 (CPAGNNSTVKEM). A helical transmembrane segment spans residues 271-290 (VMAMMYTVVTPMLNPFIYSL). Residues 291 to 310 (RNRDMKRALIRVICSMKITL) lie on the Cytoplasmic side of the membrane.

It belongs to the G-protein coupled receptor 1 family. As to expression, olfactory epithelium.

It is found in the cell membrane. Its function is as follows. Odorant receptor. The chain is Olfactory receptor 1496 (Olr1496) from Rattus norvegicus (Rat).